A 336-amino-acid polypeptide reads, in one-letter code: Glucokinase (336 aa).

ATP is bound at residue 12 to 17 (ADIGGT).

The protein belongs to the bacterial glucokinase family.

It localises to the cytoplasm. It catalyses the reaction D-glucose + ATP = D-glucose 6-phosphate + ADP + H(+). In Helicobacter pylori (strain P12), this protein is Glucokinase.